A 392-amino-acid polypeptide reads, in one-letter code: MKCAVDIESRDVEEMYINIDPIQAGGRLTVDAMKAAISFADGYSVCDNCRSPFRLDYIQKPPIAQFHADLAAWLNMDTARVVPGARRGFQAVASTYVEKGDPVIVTSLAHYTEFVAVEEAGGIPLEVPKDEKNHITPDAAAEKIEAVILEFSKTPPLLFIDHVDYQFGNVHDVAAITKVAHQYDIPVLVNGAYSVGIMPVDGKALGADFVVGSGHKSMAAPAPSGVLATTNEHAERVFRTTQAKGDVTGRTFGIKEVEMMGCTLMGVTVVGMMASFPHVKERVKHWDTEVAHSQAVVDALLSIEGTKVLSDYPRQHTLTRIDTRESFDKVAQQHKKRGFFLSSDLKKRGITGVIPGSTRVWKFNTFGLTEKQIRHVGESFVEIARENGLNIV.

Residues 85–86, Asn190, and 213–215 contribute to the pyridoxal 5'-phosphate site; these read AR and SGH. Lys216 is modified (N6-(pyridoxal phosphate)lysine).

Belongs to the SepCysS family. Homodimer. Interacts with SepRS. Pyridoxal 5'-phosphate is required as a cofactor.

It catalyses the reaction O-phospho-L-seryl-tRNA(Cys) + hydrogen sulfide + H(+) = L-cysteinyl-tRNA(Cys) + phosphate. Its function is as follows. Converts O-phospho-L-seryl-tRNA(Cys) (Sep-tRNA(Cys)) to L-cysteinyl-tRNA(Cys) (Cys-tRNA(Cys)). The sequence is that of O-phospho-L-seryl-tRNA:Cys-tRNA synthase from Methanoculleus marisnigri (strain ATCC 35101 / DSM 1498 / JR1).